The primary structure comprises 118 residues: Large ribosomal subunit protein bL17 (118 aa).

The protein belongs to the bacterial ribosomal protein bL17 family. In terms of assembly, part of the 50S ribosomal subunit. Contacts protein L32.

The protein is Large ribosomal subunit protein bL17 of Aster yellows witches'-broom phytoplasma (strain AYWB).